Consider the following 339-residue polypeptide: DNA-directed RNA polymerase subunit alpha (339 aa).

Positions 1–235 (MVIQKNWQEL…DQLQVFVNFE (235 aa)) are alpha N-terminal domain (alpha-NTD). The segment at 251–339 (FNPALLKKVD…DLAKRFEEHY (89 aa)) is alpha C-terminal domain (alpha-CTD).

It belongs to the RNA polymerase alpha chain family. In terms of assembly, homodimer. The RNAP catalytic core consists of 2 alpha, 1 beta, 1 beta' and 1 omega subunit. When a sigma factor is associated with the core the holoenzyme is formed, which can initiate transcription.

The catalysed reaction is RNA(n) + a ribonucleoside 5'-triphosphate = RNA(n+1) + diphosphate. DNA-dependent RNA polymerase catalyzes the transcription of DNA into RNA using the four ribonucleoside triphosphates as substrates. The chain is DNA-directed RNA polymerase subunit alpha from Methylorubrum populi (strain ATCC BAA-705 / NCIMB 13946 / BJ001) (Methylobacterium populi).